The following is a 494-amino-acid chain: Psoralen synthase (494 aa).

Residues 12 to 29 traverse the membrane as a helical segment; sequence YFFSLFLVTIFLYKWLTL. Cys-436 contacts heme.

The protein belongs to the cytochrome P450 family.

It localises to the endoplasmic reticulum membrane. Its subcellular location is the microsome membrane. It catalyses the reaction (7S)-marmesin + reduced [NADPH--hemoprotein reductase] + O2 = psoralen + acetone + oxidized [NADPH--hemoprotein reductase] + 2 H2O + H(+). Inhibited by columbianetin. In terms of biological role, involved in linear furanocumarin (psoralen) biosynthesis. Converts marmesin to psoralen. The polypeptide is Psoralen synthase (CYP71AJ1) (Ammi majus (Bishop's weed)).